A 420-amino-acid chain; its full sequence is Putative U-box domain-containing protein 58 (420 aa).

Residues 4–168 form the MIF4G domain; sequence NSYVLFARLC…EDALAMKKED (165 aa). The stretch at 139–352 forms a coiled coil; sequence SRVVELEGNY…TAKEQMEKRQ (214 aa). The 69-residue stretch at 352–420 folds into the U-box domain; it reads QPPSSFFCPI…ALRSAIEELV (69 aa).

It catalyses the reaction S-ubiquitinyl-[E2 ubiquitin-conjugating enzyme]-L-cysteine + [acceptor protein]-L-lysine = [E2 ubiquitin-conjugating enzyme]-L-cysteine + N(6)-ubiquitinyl-[acceptor protein]-L-lysine.. It functions in the pathway protein modification; protein ubiquitination. In terms of biological role, functions as an E3 ubiquitin ligase. The chain is Putative U-box domain-containing protein 58 (PUB58) from Arabidopsis thaliana (Mouse-ear cress).